The following is a 103-amino-acid chain: Large ribosomal subunit protein uL24 (103 aa).

It belongs to the universal ribosomal protein uL24 family. As to quaternary structure, part of the 50S ribosomal subunit.

Its function is as follows. One of two assembly initiator proteins, it binds directly to the 5'-end of the 23S rRNA, where it nucleates assembly of the 50S subunit. In terms of biological role, one of the proteins that surrounds the polypeptide exit tunnel on the outside of the subunit. In Brucella ovis (strain ATCC 25840 / 63/290 / NCTC 10512), this protein is Large ribosomal subunit protein uL24.